A 617-amino-acid polypeptide reads, in one-letter code: Tetratricopeptide repeat protein 39B (617 aa).

TPR repeat units lie at residues 328–361, 520–553, and 561–594; these read SLILFYHARIELLKGNTEKAQETFRKCISVQEEW, CLVKLLKGCCLKNLERPLQAELCFNHVVESEKLL, and PFTLFELAFLYKSQGEIDKAIKVLETARNNYKDY.

Belongs to the TTC39 family. High expression in lung and spleen. Low lower expression in liver and small intestine. Weak expression in heart, brain, kidney, adipose, and adrenal gland.

Regulates high density lipoprotein (HDL) cholesterol metabolism by promoting the ubiquitination and degradation of the oxysterols receptors LXR (NR1H2 and NR1H3). The sequence is that of Tetratricopeptide repeat protein 39B from Mus musculus (Mouse).